Reading from the N-terminus, the 353-residue chain is Pleckstrin-2 (353 aa).

Position 1 is an N-acetylmethionine (Met1). Positions 4–104 constitute a PH 1 domain; it reads GVLKEGFLVK…WAFEITGAIH (101 aa). Ser120 carries the phosphoserine modification. The region spanning 139-225 is the DEP domain; the sequence is TSTGIRPSPN…DSTALYTFAE (87 aa). The PH 2 domain occupies 247–353; it reads TVVKQGYLSK…EWIEAIKKLT (107 aa).

As to expression, ubiquitous. Most abundant in the thymus, large bowel, small bowel, stomach, and prostate.

The protein resides in the cell projection. Its subcellular location is the lamellipodium membrane. The protein localises to the cytoplasm. It localises to the cytoskeleton. Its function is as follows. May help orchestrate cytoskeletal arrangement. Contribute to lamellipodia formation. Overexpression of pleckstrin 2 causes large lamellipodia and peripheral ruffle formation. The sequence is that of Pleckstrin-2 (Plek2) from Mus musculus (Mouse).